We begin with the raw amino-acid sequence, 228 residues long: MPHVEMLLLAVAALWVCVRGQEPGRKAVADRYAVYWNSTNPRFQQGDYHIDVCINDYLDVFCPHYEDSVPEDKTERYVLYMVNFDGYSSCDHISKGFKRWECNRPHSPNGPLKFSEKFQLFTPFSLGFEFRPGREYFYISSAIPDNGRRSCLKLKVFVRPANSCMKTIGVHDRVFDVNDKVENSLEPADDTVRESAEPSRGENAAQTPRIPIRLLATLLFLLAMLLIL.

The signal sequence occupies residues 1–20 (MPHVEMLLLAVAALWVCVRG). The Ephrin RBD domain occupies 29 to 162 (ADRYAVYWNS…KLKVFVRPAN (134 aa)). A glycan (N-linked (GlcNAc...) asparagine) is linked at Asn-37. 2 disulfides stabilise this stretch: Cys-62/Cys-102 and Cys-90/Cys-151. Asn-203 carries GPI-anchor amidated asparagine lipidation. Residues 204-228 (AAQTPRIPIRLLATLLFLLAMLLIL) constitute a propeptide, removed in mature form.

It belongs to the ephrin family. Expressed in a graded fashion across the tectum being more strongly expressed towards the posterior pole.

It is found in the cell membrane. Its function is as follows. Cell surface GPI-bound ligand for Eph receptors, a family of receptor tyrosine kinases which are crucial for migration, repulsion and adhesion during neuronal, vascular and epithelial development. Binds promiscuously Eph receptors residing on adjacent cells, leading to contact-dependent bidirectional signaling into neighboring cells. Induces compartmentalized signaling within a caveolae-like membrane microdomain when bound to the extracellular domain of its cognate receptor. This signaling event requires the activity of the Fyn tyrosine kinase. Activates the EPHA3 receptor to regulate cell-cell adhesion and cytoskeletal organization. With the receptor EPHA2 may regulate lens fiber cells shape and interactions and be important for lens transparency maintenance. May function actively to stimulate axon fasciculation. Induces growth cone collapse and repulsion of retinal ganglion cell axons. In Gallus gallus (Chicken), this protein is Ephrin-A5 (EFNA5).